A 159-amino-acid polypeptide reads, in one-letter code: 2-C-methyl-D-erythritol 2,4-cyclodiphosphate synthase (159 aa).

A divalent metal cation is bound by residues aspartate 8 and histidine 10. 4-CDP-2-C-methyl-D-erythritol 2-phosphate-binding positions include 8-10 (DVH) and 34-35 (HS). Histidine 42 is a binding site for a divalent metal cation. 4-CDP-2-C-methyl-D-erythritol 2-phosphate is bound by residues 56 to 58 (DIG), 61 to 65 (FPDTD), 100 to 106 (AQAPKML), 132 to 135 (TTTE), phenylalanine 139, and arginine 142.

It belongs to the IspF family. As to quaternary structure, homotrimer. The cofactor is a divalent metal cation.

The catalysed reaction is 4-CDP-2-C-methyl-D-erythritol 2-phosphate = 2-C-methyl-D-erythritol 2,4-cyclic diphosphate + CMP. Its pathway is isoprenoid biosynthesis; isopentenyl diphosphate biosynthesis via DXP pathway; isopentenyl diphosphate from 1-deoxy-D-xylulose 5-phosphate: step 4/6. In terms of biological role, involved in the biosynthesis of isopentenyl diphosphate (IPP) and dimethylallyl diphosphate (DMAPP), two major building blocks of isoprenoid compounds. Catalyzes the conversion of 4-diphosphocytidyl-2-C-methyl-D-erythritol 2-phosphate (CDP-ME2P) to 2-C-methyl-D-erythritol 2,4-cyclodiphosphate (ME-CPP) with a corresponding release of cytidine 5-monophosphate (CMP). This Salmonella typhi protein is 2-C-methyl-D-erythritol 2,4-cyclodiphosphate synthase.